Reading from the N-terminus, the 26-residue chain is Protein YsdD (26 aa).

Residues 1 to 26 form a disordered region; sequence MTIDKNWLNRSNKDPGRSLRFTHQPV.

In Escherichia coli (strain K12), this protein is Protein YsdD.